The chain runs to 553 residues: NAD(P)H-quinone oxidoreductase chain 4 2 (553 aa).

Helical transmembrane passes span 6–26 (FPWLSAIILLPLLASFLIPVI), 34–54 (VRWFALGVGLADFILMCYVFL), 87–107 (ISAPLVLLAGLVTTLSILAAW), 115–135 (LFYFLMLLLYAAQIGVFVAQD), 136–156 (LLLFFLMWEIELIPVYLLVSI), 169–189 (FLLYTAAASIFILVAGLAMAL), 210–230 (ALELVLYAGLLIAFGVKLAIF), 244–264 (SAPVSMILAGVLLKMGGYGLI), 276–296 (IYFAPILAILGVVNIIYGAFA), 312–332 (VSHMGFVLLGIASFTDVGISG), 333–353 (AMLQMLSHGLIAAVLFFLAGV), 376–396 (VFALFTAGAMASLALPGMSGF), 418–438 (VVTVFLASVGLILTPIYLLSM), and 487–507 (IFIAVSFLALIVAIGFYPQLA).

This sequence belongs to the complex I subunit 4 family.

Its subcellular location is the cellular thylakoid membrane. It carries out the reaction a plastoquinone + NADH + (n+1) H(+)(in) = a plastoquinol + NAD(+) + n H(+)(out). The catalysed reaction is a plastoquinone + NADPH + (n+1) H(+)(in) = a plastoquinol + NADP(+) + n H(+)(out). In terms of biological role, NDH-1 shuttles electrons from NAD(P)H, via FMN and iron-sulfur (Fe-S) centers, to quinones in the respiratory chain. The immediate electron acceptor for the enzyme in this species is believed to be plastoquinone. Couples the redox reaction to proton translocation (for every two electrons transferred, four hydrogen ions are translocated across the cytoplasmic membrane), and thus conserves the redox energy in a proton gradient. The polypeptide is NAD(P)H-quinone oxidoreductase chain 4 2 (Microcystis aeruginosa (strain NIES-843 / IAM M-2473)).